A 95-amino-acid chain; its full sequence is Protein TusB (95 aa).

It belongs to the DsrH/TusB family. Heterohexamer, formed by a dimer of trimers. The hexameric TusBCD complex contains 2 copies each of TusB, TusC and TusD. The TusBCD complex interacts with TusE.

Its subcellular location is the cytoplasm. Part of a sulfur-relay system required for 2-thiolation of 5-methylaminomethyl-2-thiouridine (mnm(5)s(2)U) at tRNA wobble positions. In Escherichia fergusonii (strain ATCC 35469 / DSM 13698 / CCUG 18766 / IAM 14443 / JCM 21226 / LMG 7866 / NBRC 102419 / NCTC 12128 / CDC 0568-73), this protein is Protein TusB.